The sequence spans 630 residues: NUAK family SNF1-like kinase 2 (630 aa).

Methionine 1 carries the post-translational modification N-acetylmethionine. One can recognise a Protein kinase domain in the interval 57–307; it reads YEFLETLGKG…LEDVASHWWV (251 aa). ATP is bound by residues 63 to 71 and lysine 85; that span reads LGKGTYGKV. Aspartate 179 serves as the catalytic Proton acceptor. Phosphothreonine is present on threonine 212. 2 disordered regions span residues 361-504 and 521-566; these read HVPG…RLHR and GTAP…LDLP. The segment covering 464–476 has biased composition (low complexity); it reads SGYYSSPEPSESG. Phosphoserine is present on residues serine 529, serine 550, serine 553, and serine 579.

The protein belongs to the protein kinase superfamily. CAMK Ser/Thr protein kinase family. SNF1 subfamily. It depends on Mg(2+) as a cofactor. Post-translationally, phosphorylated at Thr-212 by STK11/LKB1 in complex with STE20-related adapter-alpha (STRADA) pseudo kinase and CAB39. Autophosphorylation is also possible at Thr-212. Expressed in liver, skin, testis, uterus, ovary, adrenal gland and brain (at protein level). Expressed in kidney, heart, skin, spleen, lung, uterus, liver and the exocrine and endocrine compartments of the human pancreas. A kinase-inactive isoform also appears to be expressed in the skin, spleen, lung, uterus, liver and testis.

The enzyme catalyses L-seryl-[protein] + ATP = O-phospho-L-seryl-[protein] + ADP + H(+). It carries out the reaction L-threonyl-[protein] + ATP = O-phospho-L-threonyl-[protein] + ADP + H(+). Activated by phosphorylation on Thr-212 by STK11 in complex with STE20-related adapter-alpha (STRAD alpha) pseudo kinase and CAB39. Functionally, stress-activated kinase involved in tolerance to glucose starvation. Induces cell-cell detachment by increasing F-actin conversion to G-actin. Expression is induced by CD95 or TNF-alpha, via NF-kappa-B. Protects cells from CD95-mediated apoptosis and is required for the increased motility and invasiveness of CD95-activated tumor cells. Phosphorylates LATS1 and LATS2. Plays a key role in neural tube closure during embryonic development through LATS2 phosphorylation and regulation of the nuclear localization of YAP1 a critical downstream regulatory target in the Hippo signaling pathway. This is NUAK family SNF1-like kinase 2 from Rattus norvegicus (Rat).